Reading from the N-terminus, the 284-residue chain is Malonyl-[acyl-carrier protein] O-methyltransferase (284 aa).

This sequence belongs to the methyltransferase superfamily.

It catalyses the reaction malonyl-[ACP] + S-adenosyl-L-methionine = malonyl-[ACP] methyl ester + S-adenosyl-L-homocysteine. It participates in cofactor biosynthesis; biotin biosynthesis. Its function is as follows. Converts the free carboxyl group of a malonyl-thioester to its methyl ester by transfer of a methyl group from S-adenosyl-L-methionine (SAM). It allows to synthesize pimeloyl-ACP via the fatty acid synthetic pathway. The protein is Malonyl-[acyl-carrier protein] O-methyltransferase of Legionella pneumophila subsp. pneumophila (strain Philadelphia 1 / ATCC 33152 / DSM 7513).